Consider the following 429-residue polypeptide: Formate-dependent phosphoribosylglycinamide formyltransferase (429 aa).

Residues 26 to 27 (EL) and glutamate 86 each bind N(1)-(5-phospho-beta-D-ribosyl)glycinamide. ATP-binding positions include arginine 118, lysine 159, 199–202 (EEHI), and glutamate 207. The region spanning 123-319 (ETLVKEAKVP…EFGLHLRAVL (197 aa)) is the ATP-grasp domain. Residues glutamate 276 and glutamate 288 each contribute to the Mg(2+) site. N(1)-(5-phospho-beta-D-ribosyl)glycinamide-binding positions include aspartate 295, lysine 375, and 382–383 (RR).

It belongs to the PurK/PurT family. In terms of assembly, homodimer.

The catalysed reaction is N(1)-(5-phospho-beta-D-ribosyl)glycinamide + formate + ATP = N(2)-formyl-N(1)-(5-phospho-beta-D-ribosyl)glycinamide + ADP + phosphate + H(+). It functions in the pathway purine metabolism; IMP biosynthesis via de novo pathway; N(2)-formyl-N(1)-(5-phospho-D-ribosyl)glycinamide from N(1)-(5-phospho-D-ribosyl)glycinamide (formate route): step 1/1. Involved in the de novo purine biosynthesis. Catalyzes the transfer of formate to 5-phospho-ribosyl-glycinamide (GAR), producing 5-phospho-ribosyl-N-formylglycinamide (FGAR). Formate is provided by PurU via hydrolysis of 10-formyl-tetrahydrofolate. The sequence is that of Formate-dependent phosphoribosylglycinamide formyltransferase from Pyrococcus furiosus (strain ATCC 43587 / DSM 3638 / JCM 8422 / Vc1).